The chain runs to 348 residues: Ion-translocating oxidoreductase complex subunit D (348 aa).

Topologically, residues 1 to 22 (MAFFIASSPHLRSKRSTADVMR) are cytoplasmic. A run of 2 helical transmembrane segments spans residues 23–43 (WVLVCALPGLIAQTYFFGYGT) and 44–64 (LIQLLLAISVAVALEAGIMLL). At 65–71 (RKRSPIS) the chain is on the cytoplasmic side. Residues 72 to 91 (ALRDYSAVVTAWLLAVAIPP) form a helical membrane-spanning segment. At 92-94 (LSP) the chain is on the periplasmic side. Residues 95-117 (WWVVVIGLIFAIVIAKHLYGGLG) traverse the membrane as a helical segment. Over 118–125 (QNPFNPAM) the chain is Cytoplasmic. Residues 126 to 146 (IAYVVLLISFPVQMTSWMAPI) form a helical membrane-spanning segment. The Periplasmic segment spans residues 147–213 (KLTAEPSSLV…ETLTQPQFSG (67 aa)). FMN phosphoryl threonine is present on threonine 187. A helical transmembrane segment spans residues 214-234 (FAGIGWEWVNIAYLLGGLILL). Residues 235–242 (KLRIIRWH) are Cytoplasmic-facing. A helical membrane pass occupies residues 243-263 (IPVAMLAGLVFTALLAQLFAP). At 264–265 (GT) the chain is on the periplasmic side. The helical transmembrane segment at 266–286 (TASPMIHLLSGATMLGAFFIA) threads the bilayer. Over 287–299 (TDPVSASTTDKGR) the chain is Cytoplasmic. Transmembrane regions (helical) follow at residues 300–320 (LIYGFFIGAMVFLIRSWGGFP) and 321–341 (DGVAFAVLLANMCVPLIDYYT). The Cytoplasmic segment spans residues 342 to 348 (KPRTYGH).

It belongs to the NqrB/RnfD family. In terms of assembly, the complex is composed of six subunits: RnfA, RnfB, RnfC, RnfD, RnfE and RnfG. The cofactor is FMN.

Its subcellular location is the cell inner membrane. Functionally, part of a membrane-bound complex that couples electron transfer with translocation of ions across the membrane. In Vibrio cholerae serotype O1 (strain ATCC 39541 / Classical Ogawa 395 / O395), this protein is Ion-translocating oxidoreductase complex subunit D.